The primary structure comprises 1184 residues: PR domain zinc finger protein 10 (1184 aa).

Residues 122 to 162 (LDAKEEEEEEEDEDEDTEEEEEEDAEDTDVDDWQPDPPRPF) form a disordered region. The span at 125 to 155 (KEEEEEEEDEDEDTEEEEEEDAEDTDVDDWQ) shows a compositional bias: acidic residues. One can recognise an SET domain in the interval 202–320 (LPLVLYIDRF…PKQELKVWYA (119 aa)). The segment at 221-325 (IPKRTQFGPV…KVWYAASYAE (105 aa)) is N-terminal PR domain; essential for transcriptional activator activity. The segment at 349 to 371 (WPCYECNRRFISSEQLQQHLNSH) adopts a C2H2-type 1 zinc-finger fold. Lys374 is covalently cross-linked (Glycyl lysine isopeptide (Lys-Gly) (interchain with G-Cter in SUMO2)). The span at 381 to 401 (TRGRGRGRGKRRFGPGRRPGR) shows a compositional bias: basic residues. Positions 381–405 (TRGRGRGRGKRRFGPGRRPGRPPKF) are disordered. Ser418 carries the phosphoserine modification. Thr422 is modified (phosphothreonine). The interval 444-487 (GLDQPEQASIPIPQLPQETPPSLEQEPETHTLHLQPQQEESLVP) is disordered. A compositionally biased stretch (polar residues) spans 475-487 (LHLQPQQEESLVP). 8 consecutive C2H2-type zinc fingers follow at residues 520 to 542 (FKCL…LRFH), 550 to 572 (LTCD…MKLH), 578 to 600 (YSCI…VAIH), 606 to 629 (FTCP…RSFH), 634 to 656 (YQCT…MLRH), 662 to 685 (FLCS…QRMH), 717 to 740 (FKCR…SKRH), and 850 to 873 (VCCP…RKKH). Residues 917-1164 (QAMTELSQTL…TGPSQQQTTQ (248 aa)) form a C-terminal glutamine-rich region; essential for transcriptional activator activity region. Positions 1004-1054 (EPAPAAPSASQVAGQPLSPSAQQVQQGLSPSHIQGSSSTQGQALQQQQNSS) are disordered. The segment covering 1014 to 1036 (QVAGQPLSPSAQQVQQGLSPSHI) has biased composition (polar residues). Positions 1037 to 1054 (QGSSSTQGQALQQQQNSS) are enriched in low complexity.

It belongs to the class V-like SAM-binding methyltransferase superfamily. As to expression, present in brain, liver, kidney, spleen and thymus (at protein level).

The protein localises to the nucleus. Transcriptional activator, essential for early embryonic development and survival of embryonic stem cells (ESCs). Supports cell growth and survival during early development by transcriptionally activating the expression of the translation initiation factor EIF3B, to sustain global translation. Activates the transcription of FLNC. The sequence is that of PR domain zinc finger protein 10 (Prdm10) from Mus musculus (Mouse).